A 686-amino-acid chain; its full sequence is Methionine--tRNA ligase (686 aa).

The 'HIGH' region motif lies at 15–25 (PYANGSIHLGH). Positions 146, 149, 159, and 162 each coordinate Zn(2+). The 'KMSKS' region signature appears at 332–336 (KMSKS). Position 335 (K335) interacts with ATP. The interval 550-571 (AAAEAAAKEKAEAEKEQASQTE) is disordered. The tRNA-binding domain occupies 585 to 686 (AFSAVDMRIA…EGAQPGMRVM (102 aa)).

The protein belongs to the class-I aminoacyl-tRNA synthetase family. MetG type 1 subfamily. As to quaternary structure, homodimer. Requires Zn(2+) as cofactor.

The protein resides in the cytoplasm. The catalysed reaction is tRNA(Met) + L-methionine + ATP = L-methionyl-tRNA(Met) + AMP + diphosphate. Is required not only for elongation of protein synthesis but also for the initiation of all mRNA translation through initiator tRNA(fMet) aminoacylation. The polypeptide is Methionine--tRNA ligase (Vibrio atlanticus (strain LGP32) (Vibrio splendidus (strain Mel32))).